A 391-amino-acid polypeptide reads, in one-letter code: Phosphoglycerate kinase (391 aa).

Substrate is bound by residues 21–23 (DFN), R36, 59–62 (HLGR), R113, and R146. Residues K197, E319, and 345–348 (GGDT) contribute to the ATP site.

This sequence belongs to the phosphoglycerate kinase family. As to quaternary structure, monomer.

It is found in the cytoplasm. It catalyses the reaction (2R)-3-phosphoglycerate + ATP = (2R)-3-phospho-glyceroyl phosphate + ADP. Its pathway is carbohydrate degradation; glycolysis; pyruvate from D-glyceraldehyde 3-phosphate: step 2/5. In Methylococcus capsulatus (strain ATCC 33009 / NCIMB 11132 / Bath), this protein is Phosphoglycerate kinase.